The following is a 302-amino-acid chain: Lysosomal thioesterase PPT2 (302 aa).

The N-terminal stretch at 1–27 (MPGLWRQRLPSAWALLLLPFLPLLLPA) is a signal peptide. N-linked (GlcNAc...) asparagine glycosylation is present at N60. 2 disulfides stabilise this stretch: C109–C117 and C165–C176. Catalysis depends on S111, which acts as the Nucleophile. N190 and N206 each carry an N-linked (GlcNAc...) asparagine glycan. The active site involves D228. N-linked (GlcNAc...) asparagine glycosylation is present at N245. A disulfide bridge connects residues C276 and C296. H283 is a catalytic residue. The N-linked (GlcNAc...) asparagine glycan is linked to N289.

It belongs to the palmitoyl-protein thioesterase family.

Its subcellular location is the lysosome. It catalyses the reaction hexadecanoyl-CoA + H2O = hexadecanoate + CoA + H(+). The catalysed reaction is S-hexadecanoyl-N-acetylcysteamine + H2O = N-acetylcysteamine + hexadecanoate + H(+). Its function is as follows. Catalyzes the cleavage of thioester bonds from S-palmitoyl-CoA or S-palmitoyl-N-acetylcysteamine (unbranched structures) but does not have activity against palmitoylcysteine or palmitoylated proteins, branched structures or bulky head groups. Conversely, hydrolyzes both long and short chain fatty acyl-CoA substrate. This chain is Lysosomal thioesterase PPT2 (Ppt2), found in Rattus norvegicus (Rat).